A 343-amino-acid chain; its full sequence is Ferrochelatase (343 aa).

Residues His191 and Glu270 each coordinate Fe cation.

This sequence belongs to the ferrochelatase family.

The protein resides in the cytoplasm. The enzyme catalyses heme b + 2 H(+) = protoporphyrin IX + Fe(2+). Its pathway is porphyrin-containing compound metabolism; protoheme biosynthesis; protoheme from protoporphyrin-IX: step 1/1. Its function is as follows. Catalyzes the ferrous insertion into protoporphyrin IX. The chain is Ferrochelatase from Phenylobacterium zucineum (strain HLK1).